The following is an 856-amino-acid chain: Alanine/arginine aminopeptidase (856 aa).

Substrate is bound by residues Glu132 and 264 to 268 (GAMEN). His300 contacts Zn(2+). Glu301 acts as the Proton acceptor in catalysis. The Zn(2+) site is built by His304 and Glu323.

The protein belongs to the peptidase M1 family. Zn(2+) serves as cofactor.

Its function is as follows. Positive effector of glycogen accumulation. May be involved in nutrient-sensing. This is Alanine/arginine aminopeptidase (AAP1) from Saccharomyces cerevisiae (strain ATCC 204508 / S288c) (Baker's yeast).